The following is a 618-amino-acid chain: Beta-glucosidase C (618 aa).

Positions 1-19 are cleaved as a signal peptide; that stretch reads MRVDSTVLALVALATDCLG. 5 N-linked (GlcNAc...) asparagine glycosylation sites follow: N40, N82, N104, N211, and N263. D330 is a catalytic residue. N-linked (GlcNAc...) asparagine glycans are attached at residues N417, N448, N477, N482, N502, and N517.

Belongs to the glycosyl hydrolase 3 family.

The protein resides in the secreted. It carries out the reaction Hydrolysis of terminal, non-reducing beta-D-glucosyl residues with release of beta-D-glucose.. It participates in glycan metabolism; cellulose degradation. In terms of biological role, beta-glucosidases are one of a number of cellulolytic enzymes involved in the degradation of cellulosic biomass. Catalyzes the last step releasing glucose from the inhibitory cellobiose. This is Beta-glucosidase C (bglC) from Emericella nidulans (strain FGSC A4 / ATCC 38163 / CBS 112.46 / NRRL 194 / M139) (Aspergillus nidulans).